Reading from the N-terminus, the 370-residue chain is Quinolinate synthase (370 aa).

Positions 62 and 83 each coordinate iminosuccinate. Residue Cys-128 participates in [4Fe-4S] cluster binding. Iminosuccinate-binding positions include 154-156 (YAN) and Ser-171. Position 215 (Cys-215) interacts with [4Fe-4S] cluster. Iminosuccinate contacts are provided by residues 241 to 243 (HPE) and Thr-258. Cys-312 is a [4Fe-4S] cluster binding site.

This sequence belongs to the quinolinate synthase family. Type 1 subfamily. [4Fe-4S] cluster is required as a cofactor.

The protein localises to the cytoplasm. The enzyme catalyses iminosuccinate + dihydroxyacetone phosphate = quinolinate + phosphate + 2 H2O + H(+). The protein operates within cofactor biosynthesis; NAD(+) biosynthesis; quinolinate from iminoaspartate: step 1/1. Catalyzes the condensation of iminoaspartate with dihydroxyacetone phosphate to form quinolinate. This is Quinolinate synthase from Neisseria meningitidis serogroup C (strain 053442).